A 274-amino-acid chain; its full sequence is Ommochrome-binding protein (274 aa).

The signal sequence occupies residues 1–18 (MKLLILTICALHVNQMMA). N-linked (GlcNAc...) asparagine glycosylation is present at N183.

Monomer. As to expression, present in larval hemolymph and synthesized by the fat body.

Its function is as follows. Binds to an ommochrome, ommatin D which is a yellow chromophore. May be involved in guiding the chromophore through the hemolymph from the epidermis to the gut. The chain is Ommochrome-binding protein from Manduca sexta (Tobacco hawkmoth).